A 425-amino-acid polypeptide reads, in one-letter code: MKPMHIAMALFSAAMFFVLAGVFMGVQLELDGTKLVVDTAADIRWQWIFIGTAVVFFFQLLRPMFQKAVKHVSGPKFILPAIDGSTVKQKLFLMALLVIAVAWPFMVSRGSVDIATMTMIYIILGLGLNVVVGLSGLLVLGYGGFYAIGAYTFALLNHYYGLGFWTCLPLAGLVSAAAGFLLGFPVLRLRGDYLAIVTLGFGEIVRILLLNNTEITGGPNGISQIPKPTLFGLEFSRSTREGGWDTFSNFFGVKYDPSDRVIFLYLVALLLVVLSLFVINRLLRMPLGRAWEALREDEIACRSLGLSPTRIKLTAFTISAAFAGFAGTLFAARQGFVSPESFTFAESAFVLAIVVLGGMGSQFAVILAAVLLVVSRELMRDFNEYSMLMLGGLMVLMMIWRPQGLLPMTRPQLKLKSGQAKGEQA.

A run of 11 helical transmembrane segments spans residues 6 to 26 (IAMA…FMGV), 45 to 65 (WQWI…RPMF), 92 to 112 (FLMA…RGSV), 120 to 140 (IYII…LLVL), 145 to 165 (FYAI…LGFW), 167 to 187 (CLPL…FPVL), 191 to 211 (GDYL…LLLN), 260 to 280 (RVIF…FVIN), 311 to 331 (IKLT…TLFA), 353 to 373 (IVVL…VLLV), and 388 to 408 (LMLG…LLPM).

The protein belongs to the binding-protein-dependent transport system permease family. LivHM subfamily.

Its subcellular location is the cell inner membrane. Part of the binding-protein-dependent transport system for branched-chain amino acids. Probably responsible for the translocation of the substrates across the membrane. This Salmonella typhimurium (strain LT2 / SGSC1412 / ATCC 700720) protein is High-affinity branched-chain amino acid transport system permease protein LivM (livM).